Consider the following 400-residue polypeptide: MKIVLAYSGGLDTSIILKWLKETYGAEVIAFTADIGQGEEVEEAREKALRTGASKAIALDLKEEFVRDFVFPMMRAGAVYEGYYLLGTSIARPLIAKHLVRIAEEEGAEAIAHGATGKGNDQVRFELTAYALKPDIKVIAPWREWSFQGRKEMIAYAEAHGIPVPVTQEKPYSMDANLLHISYEGGVLEDPWAEPPKGMFRMTQDPEEAPDAPEYVEVEFFEGDPVAVNGERLSPAALLQRLNELGGRHGVGRVDIVENRFVGMKSRGVYETPGGTILYHARRAVESLTLDREVLHQRDMLSPKYAELVYYGFWYAPEREALQAYFDHVAKNVTGVARLKLYKGNVYVVGRKAPKSLYRQDLVSFDEAGGYDQKDAEGFIKIQALRLRVRALVEREGHGA.

ATP contacts are provided by residues 6 to 14 (AYSGGLDTS) and alanine 33. The L-citrulline site is built by tyrosine 84 and serine 89. Glycine 114 lines the ATP pocket. Residues threonine 116, asparagine 120, and aspartate 121 each coordinate L-aspartate. L-citrulline is bound at residue asparagine 120. Arginine 124, serine 173, serine 182, glutamate 258, and tyrosine 270 together coordinate L-citrulline.

This sequence belongs to the argininosuccinate synthase family. Type 1 subfamily. As to quaternary structure, homotetramer.

The protein localises to the cytoplasm. The catalysed reaction is L-citrulline + L-aspartate + ATP = 2-(N(omega)-L-arginino)succinate + AMP + diphosphate + H(+). Its pathway is amino-acid biosynthesis; L-arginine biosynthesis; L-arginine from L-ornithine and carbamoyl phosphate: step 2/3. In Thermus thermophilus (strain ATCC BAA-163 / DSM 7039 / HB27), this protein is Argininosuccinate synthase.